A 138-amino-acid polypeptide reads, in one-letter code: Small ribosomal subunit protein uS11B (138 aa).

The segment at 118 to 138 (DVTPVPSDSTRKKGGRRGRRL) is disordered. Basic residues predominate over residues 129 to 138 (KKGGRRGRRL).

It belongs to the universal ribosomal protein uS11 family. As to quaternary structure, component of the small ribosomal subunit (SSU). Mature yeast ribosomes consist of a small (40S) and a large (60S) subunit. The 40S small subunit contains 1 molecule of ribosomal RNA (18S rRNA) and 33 different proteins (encoded by 57 genes). The large 60S subunit contains 3 rRNA molecules (25S, 5.8S and 5S rRNA) and 46 different proteins (encoded by 81 genes). uS11 interacts with eS1 forming part of the mRNA exit tunnel. uS11 interacts with snoRNA U3. uS11 interacts with MPP10. Component of the ribosomal small subunit (SSU) processome composed of at least 40 protein subunits and snoRNA U3.

The protein resides in the cytoplasm. It localises to the nucleus. Its subcellular location is the nucleolus. In terms of biological role, component of the ribosome, a large ribonucleoprotein complex responsible for the synthesis of proteins in the cell. The small ribosomal subunit (SSU) binds messenger RNAs (mRNAs) and translates the encoded message by selecting cognate aminoacyl-transfer RNA (tRNA) molecules. The large subunit (LSU) contains the ribosomal catalytic site termed the peptidyl transferase center (PTC), which catalyzes the formation of peptide bonds, thereby polymerizing the amino acids delivered by tRNAs into a polypeptide chain. The nascent polypeptides leave the ribosome through a tunnel in the LSU and interact with protein factors that function in enzymatic processing, targeting, and the membrane insertion of nascent chains at the exit of the ribosomal tunnel. uS11 is involved in nucleolar processing of pre-18S ribosomal RNA and ribosome assembly. The protein is Small ribosomal subunit protein uS11B of Saccharomyces cerevisiae (strain ATCC 204508 / S288c) (Baker's yeast).